The sequence spans 286 residues: Pantothenate synthetase (286 aa).

Position 30–37 (30–37 (MGFLHEGH)) interacts with ATP. Catalysis depends on His37, which acts as the Proton donor. Gln61 contacts (R)-pantoate. Gln61 contributes to the beta-alanine binding site. Residue 147 to 150 (GLKD) participates in ATP binding. Position 153 (Gln153) interacts with (R)-pantoate. Residues Val176 and 184–187 (KSSR) contribute to the ATP site.

This sequence belongs to the pantothenate synthetase family. Homodimer.

The protein resides in the cytoplasm. The catalysed reaction is (R)-pantoate + beta-alanine + ATP = (R)-pantothenate + AMP + diphosphate + H(+). Its pathway is cofactor biosynthesis; (R)-pantothenate biosynthesis; (R)-pantothenate from (R)-pantoate and beta-alanine: step 1/1. Catalyzes the condensation of pantoate with beta-alanine in an ATP-dependent reaction via a pantoyl-adenylate intermediate. This chain is Pantothenate synthetase, found in Bacillus subtilis (strain 168).